The chain runs to 183 residues: Cuticle protein 2 (183 aa).

The signal sequence occupies residues 1 to 15; that stretch reads MKLIVVAALIGVCAG. The 64-residue stretch at 58–121 folds into the Chitin-binding type R&amp;R domain; it reads SQGFQYVYDT…AQGAHLPTPP (64 aa).

In Lonomia obliqua (Moth), this protein is Cuticle protein 2.